The sequence spans 222 residues: Protein SHI RELATED SEQUENCE 4 (222 aa).

Zn(2+) contacts are provided by Cys72, Cys75, Cys83, Cys88, Cys92, and Cys99. Positions 72–99 form a DNA-binding region, zn(2)-C6 fungal-type; degenerate; that stretch reads CQECGNQAKKGCTHGRCRTCCKSNGLHC. The interval 114-137 is disordered; it reads RERQQQLQTPTSNPTGGSGRVGKY. Positions 118 to 128 are enriched in polar residues; the sequence is QQLQTPTSNPT. The short motif at 191–194 is the Required for homo- and heterodimerization element; it reads IAGH.

The protein belongs to the SHI protein family. Expressed in cotyledon tips, leaf primordia, hydathodes, stipules, and lateral root primordia and weakly at the edges of petals and sepals.

Its subcellular location is the nucleus. Its function is as follows. Transcription activator that binds DNA on 5'-ACTCTAC-3' and promotes auxin homeostasis-regulating gene expression (e.g. YUC genes), as well as genes affecting stamen development, cell expansion and timing of flowering. Synergistically with other SHI-related proteins, regulates gynoecium, stamen and leaf development in a dose-dependent manner, controlling apical-basal patterning. Promotes style and stigma formation, and influences vascular development during gynoecium development. May also have a role in the formation and/or maintenance of the shoot apical meristem (SAM). This Arabidopsis thaliana (Mouse-ear cress) protein is Protein SHI RELATED SEQUENCE 4 (SRS4).